A 212-amino-acid chain; its full sequence is Secreted and transmembrane protein 1b (212 aa).

A signal peptide spans 1–28 (MLAYSVTSSGLFPRMLWALLLLAASLNA). The Extracellular portion of the chain corresponds to 29 to 160 (HNDVWDEPCC…DKPPTAVRTE (132 aa)). A disulfide bridge connects residues cysteine 38 and cysteine 55. Residues asparagine 56, asparagine 85, asparagine 114, and asparagine 130 are each glycosylated (N-linked (GlcNAc...) asparagine). Residues 161-181 (VIIIIAIATTIIITGIGVFVW) form a helical membrane-spanning segment. The Cytoplasmic portion of the chain corresponds to 182-212 (YKQFPVAPQIQMSVPCLIHGSPGIPYLTLPP).

It belongs to the SECTM family. Interacts with CD7.

Its subcellular location is the cell membrane. It localises to the secreted. May be involved in thymocyte signaling. In Mus musculus (Mouse), this protein is Secreted and transmembrane protein 1b (Sectm1b).